The sequence spans 251 residues: 1-(5-phosphoribosyl)-5-[(5-phosphoribosylamino)methylideneamino] imidazole-4-carboxamide isomerase (251 aa).

The Proton acceptor role is filled by D8. D131 functions as the Proton donor in the catalytic mechanism.

It belongs to the HisA/HisF family.

The protein localises to the cytoplasm. It catalyses the reaction 1-(5-phospho-beta-D-ribosyl)-5-[(5-phospho-beta-D-ribosylamino)methylideneamino]imidazole-4-carboxamide = 5-[(5-phospho-1-deoxy-D-ribulos-1-ylimino)methylamino]-1-(5-phospho-beta-D-ribosyl)imidazole-4-carboxamide. It functions in the pathway amino-acid biosynthesis; L-histidine biosynthesis; L-histidine from 5-phospho-alpha-D-ribose 1-diphosphate: step 4/9. The sequence is that of 1-(5-phosphoribosyl)-5-[(5-phosphoribosylamino)methylideneamino] imidazole-4-carboxamide isomerase from Burkholderia cenocepacia (strain ATCC BAA-245 / DSM 16553 / LMG 16656 / NCTC 13227 / J2315 / CF5610) (Burkholderia cepacia (strain J2315)).